The primary structure comprises 229 residues: Platelet-activating factor acetylhydrolase IB subunit alpha2 (229 aa).

An N-acetylserine modification is found at Ser-2. Ser-2 is subject to Phosphoserine. Residue Ser-48 is part of the active site. Position 64 is a phosphoserine (Ser-64). Active-site residues include Asp-193 and His-196. Thr-220 is subject to Phosphothreonine.

The protein belongs to the 'GDSL' lipolytic enzyme family. Platelet-activating factor acetylhydrolase IB beta/gamma subunits subfamily. Forms a catalytic dimer which is either homodimer (alpha2/alpha2 homodimer) or heterodimer with PAFAH1B3 (alpha2/alpha1 heterodimer). Component of the cytosolic (PAF-AH (I)) heterotetrameric enzyme, which is composed of PAFAH1B1 (beta), PAFAH1B2 (alpha2) and PAFAH1B3 (alpha1) subunits. The catalytic activity of the enzyme resides in the alpha1 (PAFAH1B3) and alpha2 (PAFAH1B2) subunits, whereas the beta subunit (PAFAH1B1) has regulatory activity. Trimer formation is not essential for the catalytic activity. Interacts (homodimer form) with PAFAH1B1 (homodimer form); PAFAH1B2 competes with NDEL1 for PAFAH1B1 binding. Interacts with VLDLR; this interaction may modulate the Reelin pathway.

It is found in the cytoplasm. The catalysed reaction is a 1-O-alkyl-2-acetyl-sn-glycero-3-phosphocholine + H2O = a 1-O-alkyl-sn-glycero-3-phosphocholine + acetate + H(+). The enzyme catalyses 1-O-hexadecyl-2-acetyl-sn-glycero-3-phosphocholine + H2O = 1-O-hexadecyl-sn-glycero-3-phosphocholine + acetate + H(+). It catalyses the reaction 1-O-hexadecyl-2-acetyl-sn-glycero-3-phosphate + H2O = 1-O-hexadecyl-sn-glycero-3-phosphate + acetate + H(+). It carries out the reaction 1-O-hexadecyl-2-acetyl-sn-glycero-3-phosphoethanolamine + H2O = 1-O-hexadecyl-sn-glycero-3-phosphoethanolamine + acetate + H(+). With respect to regulation, beta subunit (PAFAH1B1) stimulates the acetylhydrolase activity of the alpha2/alpha2 catalytic homodimer. Functionally, alpha2 catalytic subunit of the cytosolic type I platelet-activating factor (PAF) acetylhydrolase (PAF-AH (I)) heterotetrameric enzyme that catalyzes the hydrolyze of the acetyl group at the sn-2 position of PAF and its analogs and modulates the action of PAF. The activity and substrate specificity of PAF-AH (I) are affected by its subunit composition. The alpha2/alpha2 homodimer (PAFAH1B2/PAFAH1B2 homodimer) hydrolyzes PAF and 1-O-alkyl-2-acetyl-sn-glycero-3-phosphorylethanolamine (AAGPE) more efficiently than 1-O-alkyl-2-acetyl-sn-glycero-3-phosphoric acid (AAGPA). In contrast, the alpha1/alpha2 heterodimer(PAFAH1B3/PAFAH1B3 heterodimer) hydrolyzes AAGPA more efficiently than PAF, but has little hydrolytic activity towards AAGPE. May play a role in male germ cell meiosis during the late pachytenestage and meiotic divisions as well as early spermiogenesis. The chain is Platelet-activating factor acetylhydrolase IB subunit alpha2 from Pongo abelii (Sumatran orangutan).